Reading from the N-terminus, the 522-residue chain is Ribonuclease Y (522 aa).

The helical transmembrane segment at 7–23 threads the bilayer; that stretch reads SGSSAAVISGLVGFYIS. One can recognise a KH domain in the interval 212-278; the sequence is LTNLVHLNDD…TKTLELLIQD (67 aa). The region spanning 338 to 431 is the HD domain; that stretch reads ALSHTLEVAH…VCAADALSAA (94 aa).

It belongs to the RNase Y family.

It localises to the cell membrane. Functionally, endoribonuclease that initiates mRNA decay. The protein is Ribonuclease Y of Sulfurimonas denitrificans (strain ATCC 33889 / DSM 1251) (Thiomicrospira denitrificans (strain ATCC 33889 / DSM 1251)).